The following is a 303-amino-acid chain: Signal recognition particle receptor FtsY (303 aa).

GTP-binding positions include 108–115 (GVNGAGKT), 190–194 (DTAGR), and 254–257 (TKLD).

It belongs to the GTP-binding SRP family. FtsY subfamily. As to quaternary structure, part of the signal recognition particle protein translocation system, which is composed of SRP and FtsY. SRP is a ribonucleoprotein composed of Ffh and a 4.5S RNA molecule.

It is found in the cell inner membrane. It localises to the cytoplasm. The enzyme catalyses GTP + H2O = GDP + phosphate + H(+). In terms of biological role, involved in targeting and insertion of nascent membrane proteins into the cytoplasmic membrane. Acts as a receptor for the complex formed by the signal recognition particle (SRP) and the ribosome-nascent chain (RNC). Interaction with SRP-RNC leads to the transfer of the RNC complex to the Sec translocase for insertion into the membrane, the hydrolysis of GTP by both Ffh and FtsY, and the dissociation of the SRP-FtsY complex into the individual components. The polypeptide is Signal recognition particle receptor FtsY (Rickettsia felis (strain ATCC VR-1525 / URRWXCal2) (Rickettsia azadi)).